The sequence spans 314 residues: Ribosomal protein L11 methyltransferase (314 aa).

Thr166, Gly187, Asp209, and Asn251 together coordinate S-adenosyl-L-methionine.

This sequence belongs to the methyltransferase superfamily. PrmA family.

The protein resides in the cytoplasm. The catalysed reaction is L-lysyl-[protein] + 3 S-adenosyl-L-methionine = N(6),N(6),N(6)-trimethyl-L-lysyl-[protein] + 3 S-adenosyl-L-homocysteine + 3 H(+). Its function is as follows. Methylates ribosomal protein L11. The chain is Ribosomal protein L11 methyltransferase from Clostridium tetani (strain Massachusetts / E88).